The primary structure comprises 1096 residues: Cohesin subunit scc-3 (1096 aa).

A compositionally biased stretch (polar residues) spans 1-21 (MSETPTDQSPQRMSTRNQARV). 2 disordered regions span residues 1 to 53 (MSET…KKRA) and 67 to 106 (NLNN…ESAE). Residues 261–312 (IELTQSKEKTSKQIEAEKAKLKNNSAGNEKYEALVAQRTQTEERAEEIRQII) are a coiled coil. The SCD domain maps to 320-405 (FVHRYRDVVP…NKFKDRLVSM (86 aa)). A disordered region spans residues 1057–1096 (DNMSVRSGMTVTSNATMRSTASSTRGRGRGRGRSRIADDF). A compositionally biased stretch (polar residues) spans 1060-1073 (SVRSGMTVTSNATM).

Belongs to the SCC3 family. Component of the cohesin complex, composed of the smc-1 and smc-3 heterodimer attached via their hinge domain, scc-1 which links them, and scc-3. Interacts with scc-1, smc-1 and tim-1. In terms of tissue distribution, expressed in gonadal cells.

The protein resides in the nucleus. Its subcellular location is the chromosome. In terms of biological role, component of the cohesin complex, a complex required for the cohesion of sister chromatids after DNA replication. The cohesin complex apparently forms a large proteinaceous ring within which sister chromatids can be trapped. At anaphase, the scc-1 subunit of the complex is cleaved and dissociates from chromatin, allowing sister chromatids to segregate. The cohesin complex may also play a role in spindle pole assembly during mitosis. Plays an essential role in cell division during embryonic development. Required for the assembly of the synaptonemal complex between homologous chromosomes to promote sister chromatid cohesion during mitosis and meiosis. Has a role in stabilization of homologous chromosome associations during meiotic synapsis. Required for chromosome segregation during mitosis and meiosis. Plays a role in DNA double-strand break (DSB) repair during meiotic recombination and promotes the assembly of the 9-1-1 cell-cycle checkpoint response complex which is required for inducing apoptosis in response to DNA damage, at DNA damage sites. This Caenorhabditis elegans protein is Cohesin subunit scc-3.